The chain runs to 593 residues: SPI-1 type 3 secretion system translocon protein SctE (593 aa).

2 coiled-coil regions span residues 151-208 and 287-314; these read DTAK…ATDA and EGRQAEMEKKSAEFQEETRKAEETNRIM. A run of 2 helical transmembrane segments spans residues 330–350 and 409–429; these read VVAAVFTGGASLALAAVGLAV and IVGAIVAAIAMVAVIVVVAVV.

This sequence belongs to the SctE/SipB/YopB family. The core secretion machinery of the T3SS is composed of approximately 20 different proteins, including cytoplasmic components, a base, an export apparatus and a needle. This subunit is involved in the formation of a pore, called the translocon, in host membrane.

It localises to the secreted. It is found in the host membrane. Its function is as follows. Component of the type III secretion system 1 (SPI-1 T3SS), also called injectisome, which is used to inject bacterial effector proteins into eukaryotic host cells. SipB/SctE1 and SipC/SctB are inserted into the host membrane where they form a pore and allow the translocation of effector proteins into the cytosol of target cells. The protein is SPI-1 type 3 secretion system translocon protein SctE of Salmonella dublin.